Here is a 106-residue protein sequence, read N- to C-terminus: Large ribosomal subunit protein P2 (106 aa).

A disordered region spans residues 80 to 106 (AAAAPAKKVVEEKKEESDDDMGMGLFD).

It belongs to the eukaryotic ribosomal protein P1/P2 family. As to quaternary structure, P1 and P2 exist as dimers at the large ribosomal subunit. Post-translationally, phosphorylated.

In terms of biological role, plays an important role in the elongation step of protein synthesis. This is Large ribosomal subunit protein P2 (rplp2) from Dictyostelium discoideum (Social amoeba).